A 231-amino-acid chain; its full sequence is 7-cyano-7-deazaguanine synthase (231 aa).

8–18 (FSGGQDSTTCL) lines the ATP pocket. Residues C188, C197, C200, and C203 each contribute to the Zn(2+) site.

Belongs to the QueC family. Zn(2+) is required as a cofactor.

It catalyses the reaction 7-carboxy-7-deazaguanine + NH4(+) + ATP = 7-cyano-7-deazaguanine + ADP + phosphate + H2O + H(+). Its pathway is purine metabolism; 7-cyano-7-deazaguanine biosynthesis. Functionally, catalyzes the ATP-dependent conversion of 7-carboxy-7-deazaguanine (CDG) to 7-cyano-7-deazaguanine (preQ(0)). This Salmonella schwarzengrund (strain CVM19633) protein is 7-cyano-7-deazaguanine synthase.